Here is a 451-residue protein sequence, read N- to C-terminus: Phosphoglucosamine mutase (451 aa).

Ser-101 serves as the catalytic Phosphoserine intermediate. The Mg(2+) site is built by Ser-101, Asp-241, Asp-243, and Asp-245. Ser-101 carries the phosphoserine modification.

Belongs to the phosphohexose mutase family. Mg(2+) is required as a cofactor. Activated by phosphorylation.

It catalyses the reaction alpha-D-glucosamine 1-phosphate = D-glucosamine 6-phosphate. Catalyzes the conversion of glucosamine-6-phosphate to glucosamine-1-phosphate. This chain is Phosphoglucosamine mutase, found in Exiguobacterium sibiricum (strain DSM 17290 / CCUG 55495 / CIP 109462 / JCM 13490 / 255-15).